Reading from the N-terminus, the 120-residue chain is NAD(P)H-quinone oxidoreductase subunit 3, chloroplastic (120 aa).

The next 3 helical transmembrane spans lie at 9–29 (IFWA…TISG), 64–84 (MFAL…PWAM), and 88–108 (VLGI…IVGS).

It belongs to the complex I subunit 3 family. In terms of assembly, NDH is composed of at least 16 different subunits, 5 of which are encoded in the nucleus.

The protein localises to the plastid. Its subcellular location is the chloroplast thylakoid membrane. It carries out the reaction a plastoquinone + NADH + (n+1) H(+)(in) = a plastoquinol + NAD(+) + n H(+)(out). The catalysed reaction is a plastoquinone + NADPH + (n+1) H(+)(in) = a plastoquinol + NADP(+) + n H(+)(out). Its function is as follows. NDH shuttles electrons from NAD(P)H:plastoquinone, via FMN and iron-sulfur (Fe-S) centers, to quinones in the photosynthetic chain and possibly in a chloroplast respiratory chain. The immediate electron acceptor for the enzyme in this species is believed to be plastoquinone. Couples the redox reaction to proton translocation, and thus conserves the redox energy in a proton gradient. This chain is NAD(P)H-quinone oxidoreductase subunit 3, chloroplastic, found in Lotus japonicus (Lotus corniculatus var. japonicus).